Reading from the N-terminus, the 98-residue chain is NADH-ubiquinone oxidoreductase chain 4L (98 aa).

Helical transmembrane passes span 1 to 21 (MTLI…GLLM), 29 to 49 (ALLC…LTIL), and 61 to 81 (IILL…LVMV).

The protein belongs to the complex I subunit 4L family. In terms of assembly, core subunit of respiratory chain NADH dehydrogenase (Complex I) which is composed of 45 different subunits.

The protein localises to the mitochondrion inner membrane. The enzyme catalyses a ubiquinone + NADH + 5 H(+)(in) = a ubiquinol + NAD(+) + 4 H(+)(out). In terms of biological role, core subunit of the mitochondrial membrane respiratory chain NADH dehydrogenase (Complex I) which catalyzes electron transfer from NADH through the respiratory chain, using ubiquinone as an electron acceptor. Part of the enzyme membrane arm which is embedded in the lipid bilayer and involved in proton translocation. The protein is NADH-ubiquinone oxidoreductase chain 4L (MT-ND4L) of Megaptera novaeangliae (Humpback whale).